The sequence spans 243 residues: Pyridoxine 5'-phosphate synthase (243 aa).

N9 contributes to the 3-amino-2-oxopropyl phosphate binding site. 11 to 12 serves as a coordination point for 1-deoxy-D-xylulose 5-phosphate; the sequence is DH. R20 is a 3-amino-2-oxopropyl phosphate binding site. H45 acts as the Proton acceptor in catalysis. Residues R47 and H52 each coordinate 1-deoxy-D-xylulose 5-phosphate. The active-site Proton acceptor is the E72. T102 serves as a coordination point for 1-deoxy-D-xylulose 5-phosphate. The active-site Proton donor is the H193. 3-amino-2-oxopropyl phosphate contacts are provided by residues G194 and 215 to 216; that span reads GH.

Belongs to the PNP synthase family. Homooctamer; tetramer of dimers.

Its subcellular location is the cytoplasm. The enzyme catalyses 3-amino-2-oxopropyl phosphate + 1-deoxy-D-xylulose 5-phosphate = pyridoxine 5'-phosphate + phosphate + 2 H2O + H(+). Its pathway is cofactor biosynthesis; pyridoxine 5'-phosphate biosynthesis; pyridoxine 5'-phosphate from D-erythrose 4-phosphate: step 5/5. Functionally, catalyzes the complicated ring closure reaction between the two acyclic compounds 1-deoxy-D-xylulose-5-phosphate (DXP) and 3-amino-2-oxopropyl phosphate (1-amino-acetone-3-phosphate or AAP) to form pyridoxine 5'-phosphate (PNP) and inorganic phosphate. The protein is Pyridoxine 5'-phosphate synthase of Vibrio vulnificus (strain CMCP6).